The sequence spans 487 residues: Galactose-1-phosphate uridylyltransferase (487 aa).

The protein belongs to the galactose-1-phosphate uridylyltransferase type 2 family.

The protein localises to the cytoplasm. The catalysed reaction is alpha-D-galactose 1-phosphate + UDP-alpha-D-glucose = alpha-D-glucose 1-phosphate + UDP-alpha-D-galactose. It functions in the pathway carbohydrate metabolism; galactose metabolism. The polypeptide is Galactose-1-phosphate uridylyltransferase (Lactiplantibacillus plantarum (strain ATCC BAA-793 / NCIMB 8826 / WCFS1) (Lactobacillus plantarum)).